The sequence spans 318 residues: Beta-ketoacyl-[acyl-carrier-protein] synthase III (318 aa).

Catalysis depends on residues Cys-113 and His-245. Residues 246 to 250 (QANIR) form an ACP-binding region. The active site involves Asn-275.

It belongs to the thiolase-like superfamily. FabH family. In terms of assembly, homodimer.

The protein localises to the cytoplasm. The enzyme catalyses malonyl-[ACP] + acetyl-CoA + H(+) = 3-oxobutanoyl-[ACP] + CO2 + CoA. It functions in the pathway lipid metabolism; fatty acid biosynthesis. Its function is as follows. Catalyzes the condensation reaction of fatty acid synthesis by the addition to an acyl acceptor of two carbons from malonyl-ACP. Catalyzes the first condensation reaction which initiates fatty acid synthesis and may therefore play a role in governing the total rate of fatty acid production. Possesses both acetoacetyl-ACP synthase and acetyl transacylase activities. Its substrate specificity determines the biosynthesis of branched-chain and/or straight-chain of fatty acids. In Wolbachia pipientis wMel, this protein is Beta-ketoacyl-[acyl-carrier-protein] synthase III.